The primary structure comprises 290 residues: MATLRVLLSCVRGPLRPPVRCPAWRPFASGANFEYIIAEKRGKNNTVGLIQLNRPKALNALCDGLIDELNQALKIFEEDPAVGAIVLTGGDKAFAAGADIKEMQNLSFQDCYSSKFLKHWDHLTQIKKPVIAAVNGYAFGGGCELAMMCDIIYAGEKAQFAQPEILIGTIPGAGGTQRLTRTVGKSLAMEMVLTGDRISAQDAKQAGLVSKICPVETLVEEAIQCAEKIASNSKIIAAMAKESVNAAFEMTLAEGSKLEKKLFYSTFATNDRKEGMTAFVEKRKANFKDQ.

Residues 1 to 27 constitute a mitochondrion transit peptide; the sequence is MATLRVLLSCVRGPLRPPVRCPAWRPF. Thr-46 is subject to Phosphothreonine. 98–101 lines the substrate pocket; it reads ADIK. The residue at position 101 (Lys-101) is an N6-acetyllysine; alternate. An N6-succinyllysine; alternate modification is found at Lys-101. Ser-114 is subject to Phosphoserine. At Lys-115 the chain carries N6-acetyllysine; alternate. Residue Lys-115 is modified to N6-succinyllysine; alternate. Lys-118 bears the N6-acetyllysine mark. Residue Gly-141 coordinates substrate. Lys-204 is modified (N6-succinyllysine). Position 211 is an N6-acetyllysine (Lys-211).

Belongs to the enoyl-CoA hydratase/isomerase family. As to quaternary structure, homohexamer; dimer of trimers.

The protein resides in the mitochondrion matrix. The enzyme catalyses a (3S)-3-hydroxyacyl-CoA = a (2E)-enoyl-CoA + H2O. It carries out the reaction a (3E)-enoyl-CoA = a 4-saturated (2E)-enoyl-CoA. The catalysed reaction is (3E)-hexenoyl-CoA = (2E)-hexenoyl-CoA. It catalyses the reaction (3S)-3-hydroxybutanoyl-CoA = (2E)-butenoyl-CoA + H2O. The enzyme catalyses 3-hydroxyisovaleryl-CoA = 3-methylbut-2-enoyl-CoA + H2O. It carries out the reaction 3-hydroxypropanoyl-CoA = acryloyl-CoA + H2O. The catalysed reaction is 3-hydroxybutanoyl-CoA = (2E)-butenoyl-CoA + H2O. It catalyses the reaction 2-methylpropenoyl-CoA + H2O = (S)-3-hydroxyisobutanoyl-CoA. The enzyme catalyses (3S)-hydroxyhexanoyl-CoA = (2E)-hexenoyl-CoA + H2O. It carries out the reaction (3S)-hydroxydecanoyl-CoA = (2E)-decenoyl-CoA + H2O. Its pathway is lipid metabolism; fatty acid beta-oxidation. Functionally, converts unsaturated trans-2-enoyl-CoA species ((2E)-enoyl-CoA) to the corresponding (3S)-3-hydroxyacyl-CoA species through addition of a water molecule to the double bond. Catalyzes the hydration of medium- and short-chained fatty enoyl-CoA thioesters from 4 carbons long (C4) up to C16. Has high substrate specificity for crotonyl-CoA ((2E)-butenoyl-CoA) and moderate specificity for acryloyl-CoA, 3-methylcrotonyl-CoA (3-methyl-(2E)-butenoyl-CoA) and methacrylyl-CoA ((2E)-2-methylpropenoyl-CoA). Can bind tiglyl-CoA (2-methylcrotonoyl-CoA), but hydrates only a small amount of this substrate. Plays a key role in the beta-oxidation spiral of short- and medium-chain fatty acid oxidation. At a lower rate than the hydratase reaction, catalyzes the isomerase reaction of trans-3-enoyl-CoA species (such as (3E)-hexenoyl-CoA) to trans-2-enoyl-CoA species (such as (2E)-hexenoyl-CoA), which are subsequently hydrated to 3(S)-3-hydroxyacyl-CoA species (such as (3S)-hydroxyhexanoyl-CoA). The sequence is that of Enoyl-CoA hydratase, mitochondrial (ECHS1) from Pongo abelii (Sumatran orangutan).